A 337-amino-acid polypeptide reads, in one-letter code: Biotin synthase (337 aa).

The Radical SAM core domain maps to Glu58–Arg283. [4Fe-4S] cluster is bound by residues Cys73, Cys77, and Cys80. [2Fe-2S] cluster is bound by residues Cys116, Cys149, Cys208, and Arg278.

It belongs to the radical SAM superfamily. Biotin synthase family. Homodimer. [4Fe-4S] cluster serves as cofactor. It depends on [2Fe-2S] cluster as a cofactor.

It catalyses the reaction (4R,5S)-dethiobiotin + (sulfur carrier)-SH + 2 reduced [2Fe-2S]-[ferredoxin] + 2 S-adenosyl-L-methionine = (sulfur carrier)-H + biotin + 2 5'-deoxyadenosine + 2 L-methionine + 2 oxidized [2Fe-2S]-[ferredoxin]. It functions in the pathway cofactor biosynthesis; biotin biosynthesis; biotin from 7,8-diaminononanoate: step 2/2. In terms of biological role, catalyzes the conversion of dethiobiotin (DTB) to biotin by the insertion of a sulfur atom into dethiobiotin via a radical-based mechanism. This is Biotin synthase from Pseudarthrobacter chlorophenolicus (strain ATCC 700700 / DSM 12829 / CIP 107037 / JCM 12360 / KCTC 9906 / NCIMB 13794 / A6) (Arthrobacter chlorophenolicus).